Reading from the N-terminus, the 89-residue chain is Albumin-1 (89 aa).

A signal peptide is located at residue alanine 1. 3 disulfides stabilise this stretch: cysteine 4–cysteine 21, cysteine 8–cysteine 23, and cysteine 16–cysteine 33. A propeptide spanning residues 39–46 (LSSVAKMI) is cleaved from the precursor.

The C-terminal glycine may be removed from A1b.

Its function is as follows. A1b binds to basic 7S globulin (BG) and stimulates its phosphorylation activity. This chain is Albumin-1 (LEG), found in Vigna radiata var. radiata (Mung bean).